The chain runs to 268 residues: Small ribosomal subunit protein mS43 (268 aa).

The transit peptide at 1–23 (MLNTGLRKGLALSPITHLLKRCS) directs the protein to the mitochondrion.

It belongs to the mitochondrion-specific ribosomal protein mS43 family. In terms of assembly, component of the mitochondrial small ribosomal subunit (mt-SSU). Mature yeast 74S mitochondrial ribosomes consist of a small (37S) and a large (54S) subunit. The 37S small subunit contains a 15S ribosomal RNA (15S mt-rRNA) and at least 32 different proteins. The 54S large subunit contains a 21S rRNA (21S mt-rRNA) and at least 45 different proteins. mS43 forms a dimer with mS42, building a large protuberance adjacent to the mRNA channel exit in the mt-SSU body.

Its subcellular location is the mitochondrion. Functionally, component of the mitochondrial ribosome (mitoribosome), a dedicated translation machinery responsible for the synthesis of mitochondrial genome-encoded proteins, including at least some of the essential transmembrane subunits of the mitochondrial respiratory chain. The mitoribosomes are attached to the mitochondrial inner membrane and translation products are cotranslationally integrated into the membrane. The protein is Small ribosomal subunit protein mS43 of Schizosaccharomyces pombe (strain 972 / ATCC 24843) (Fission yeast).